Reading from the N-terminus, the 235-residue chain is Large ribosomal subunit protein uL1 (235 aa).

Belongs to the universal ribosomal protein uL1 family. In terms of assembly, part of the 50S ribosomal subunit.

Functionally, binds directly to 23S rRNA. The L1 stalk is quite mobile in the ribosome, and is involved in E site tRNA release. In terms of biological role, protein L1 is also a translational repressor protein, it controls the translation of the L11 operon by binding to its mRNA. In Prochlorococcus marinus (strain MIT 9215), this protein is Large ribosomal subunit protein uL1.